We begin with the raw amino-acid sequence, 565 residues long: MATNFTPISSSLYVGDLLPEVSEQHLFEIFNQVGLVSNIRVCRDTNTRRSLSYAYVNYYNGADAERALDTLNNTPIRGKACRIMWSQRDPSLRKSGVGNVFIKNLDKGIDHKALYDTFSAFGNILSCKVVTDDGNSSKGFGFVHYETQESADKAIAKVNGMMINGQKVFVGPFKSSKERGQPTEVKFTNVFFKNLSEDVGPDQLKELLQQYGEITNITIMADDKGKSKGFGFANFESAEAAKNVVENENGKIFHGKPIYAGRAQKKIEREAELKHTFETKYQGVNLYIKNIDDSIDNDKLREVFSQFGTITSAIVMKDDKATTSKGFGFVCYTAPDEATRAVTEMNGRMIGTKPLYVALAQRKDIRRAQLEMQHQQKFKTGIRQQMPPTYGSGPVFFTPAPVNPQVVYQQMMPRPRNWNGQPVGVPQGQYANMNYARGQPRQNGPRQNGGQPRQNGPRPDVSGAQPIPVQQQTTLDVAQTQQAASSAESALNLQSIINLPSRDQQNVALGEHLYPLIHNSQPDLAGKITGMLLDSLPVEELFTLTQRQDLLADKIREALEVLGSN.

4 consecutive RRM domains span residues 10 to 88, 98 to 175, 188 to 265, and 284 to 362; these read SSLY…WSQR, GNVF…PFKS, TNVF…RAQK, and VNLY…LAQR. Residues 435–466 are disordered; that stretch reads YARGQPRQNGPRQNGGQPRQNGPRPDVSGAQP. The span at 440–454 shows a compositional bias: polar residues; the sequence is PRQNGPRQNGGQPRQ. Residues 489–565 form the PABC domain; it reads SALNLQSIIN…REALEVLGSN (77 aa).

This sequence belongs to the polyadenylate-binding protein type-1 family.

The protein localises to the cytoplasm. The protein resides in the nucleus. Functionally, binds the poly(A) tail of mRNA. Appears to be an important mediator of the multiple roles of the poly(A) tail in mRNA biogenesis, stability and translation. The protein is Polyadenylate-binding protein 1-A (pabpc1A) of Dictyostelium discoideum (Social amoeba).